Here is a 380-residue protein sequence, read N- to C-terminus: Chaperone protein DnaJ (380 aa).

Residues 5 to 70 (DFYEVLGVSR…QKRAAYDQYG (66 aa)) form the J domain. The segment at 135 to 213 (GCEKDIEIPT…CHGDGRVQKT (79 aa)) adopts a CR-type zinc-finger fold. Zn(2+)-binding residues include C148, C151, C165, C168, C187, C190, C201, and C204. 4 CXXCXGXG motif repeats span residues 148-155 (CEPCDGTG), 165-172 (CSTCHGQG), 187-194 (CPTCHGKG), and 201-208 (CNSCHGDG).

The protein belongs to the DnaJ family. In terms of assembly, homodimer. Zn(2+) serves as cofactor.

The protein resides in the cytoplasm. Participates actively in the response to hyperosmotic and heat shock by preventing the aggregation of stress-denatured proteins and by disaggregating proteins, also in an autonomous, DnaK-independent fashion. Unfolded proteins bind initially to DnaJ; upon interaction with the DnaJ-bound protein, DnaK hydrolyzes its bound ATP, resulting in the formation of a stable complex. GrpE releases ADP from DnaK; ATP binding to DnaK triggers the release of the substrate protein, thus completing the reaction cycle. Several rounds of ATP-dependent interactions between DnaJ, DnaK and GrpE are required for fully efficient folding. Also involved, together with DnaK and GrpE, in the DNA replication of plasmids through activation of initiation proteins. The polypeptide is Chaperone protein DnaJ (Aliivibrio salmonicida (strain LFI1238) (Vibrio salmonicida (strain LFI1238))).